A 150-amino-acid polypeptide reads, in one-letter code: SsrA-binding protein (150 aa).

It belongs to the SmpB family.

The protein localises to the cytoplasm. Functionally, required for rescue of stalled ribosomes mediated by trans-translation. Binds to transfer-messenger RNA (tmRNA), required for stable association of tmRNA with ribosomes. tmRNA and SmpB together mimic tRNA shape, replacing the anticodon stem-loop with SmpB. tmRNA is encoded by the ssrA gene; the 2 termini fold to resemble tRNA(Ala) and it encodes a 'tag peptide', a short internal open reading frame. During trans-translation Ala-aminoacylated tmRNA acts like a tRNA, entering the A-site of stalled ribosomes, displacing the stalled mRNA. The ribosome then switches to translate the ORF on the tmRNA; the nascent peptide is terminated with the 'tag peptide' encoded by the tmRNA and targeted for degradation. The ribosome is freed to recommence translation, which seems to be the essential function of trans-translation. The sequence is that of SsrA-binding protein from Bacteroides thetaiotaomicron (strain ATCC 29148 / DSM 2079 / JCM 5827 / CCUG 10774 / NCTC 10582 / VPI-5482 / E50).